Reading from the N-terminus, the 538-residue chain is MGLLLLLLILTPLLAAYCHPDFRLLEKAQQLLQSTGSPYSTNCWLCTSSSSKTPGRAYPASSREWTTIEAELHISYQWDPNLKGLIRLANSLLSKVKQDFPDIRKEPPIFGPIFTNVNLIGIAPICVTAKRKDGTNVGTLPSTVCNVTLTVDPNQQTYQKYAHNQFHHQPRFPKPPNITFPQGTLLDKSTRFCQGRPSSCSTRNFWFQPADYNQCLQIPNLSSTAEWVLLDQTRNSLFWENKTKGANQSQTPCVQVLAGMTIATSYLSTSAVSEFSGTSVTSLFSFHISTCLKTQGAFYICGQSIHQCLPTNWTGTCTIGYVSPDIFIAPGNLSLPIPIYGNFHFPRVKRAIHLIPLLVGLGIVGSAGTGIAGIAKASFTYSQLSKEIANNIEAMAKTLTTVQEQIDSLAAVVLQNRRGLDMLTAAQGGICLALDEKCCFWVNQSGKVQDNIRQLLNRASTLQEQATQGWLNWEGTWKWFSWVLPFTGPLVSLLLLLLFGPCLLNLITQFVSSRLQATKLQMKLNKRVHPRNSQESPF.

Residues Met1–Ala15 form the signal peptide. At Ala16–Lys478 the chain is on the extracellular side. The short motif at Cys43 to Cys46 is the CXXC element. Cystine bridges form between Cys43–Cys46, Cys43–Cys439, and Cys431–Cys438. N-linked (GlcNAc...) asparagine glycosylation is found at Asn146, Asn177, Asn220, Asn241, Asn247, Asn312, and Asn332. A fusion peptide region spans residues Leu354–Ile374. Residues Leu414–Ile430 carry the CKS-17 motif. The CX6CC motif lies at Cys431–Cys439. Asn443 is a glycosylation site (N-linked (GlcNAc...) asparagine). A helical transmembrane segment spans residues Trp479 to Phe499. Residues Gly500–Phe538 are Cytoplasmic-facing.

The protein belongs to the gamma type-C retroviral envelope protein family. HERV class-I FRD env subfamily. In terms of assembly, the surface and transmembrane proteins form a heterodimer. They are attached by non-covalent interactions or by a labile interchain disulfide bond. Specific enzymatic cleavages in vivo yield the mature SU and TM proteins. Post-translationally, the CXXC motif is highly conserved across a broad range of retroviral envelope proteins. It is thought to participate in the formation of a labile disulfide bond possibly with the CX6CC motif present in the transmembrane protein.

Its subcellular location is the virion. The protein localises to the cell membrane. Its function is as follows. This endogenous retroviral envelope protein has retained its original fusogenic properties and participates in trophoblast fusion and the formation of a syncytium during placenta morphogenesis. The interaction with MFSD2A is apparently important for this process. Endogenous envelope proteins may have kept, lost or modified their original function during evolution but this one can still make pseudotypes with MLV, HIV-1 or SIV-1 virions and confer infectivity. Retroviral envelope proteins mediate receptor recognition and membrane fusion during early infection. The surface protein mediates receptor recognition, while the transmembrane protein anchors the envelope heterodimer to the viral membrane through one transmembrane domain. The other hydrophobic domain, called fusion peptide, mediates fusion of the viral membrane with the target cell membrane. The chain is Syncytin-2 (ERVFRD-1) from Callithrix jacchus (White-tufted-ear marmoset).